The chain runs to 101 residues: Putative septation protein SpoVG (101 aa).

The protein belongs to the SpoVG family.

In terms of biological role, could be involved in septation. The protein is Putative septation protein SpoVG of Anaeromyxobacter dehalogenans (strain 2CP-C).